The chain runs to 687 residues: DNA ligase (687 aa).

NAD(+)-binding positions include 34-38 (DAEYD), 83-84 (SL), and glutamate 117. Lysine 119 acts as the N6-AMP-lysine intermediate in catalysis. 4 residues coordinate NAD(+): arginine 140, glutamate 182, lysine 298, and lysine 322. Zn(2+) is bound by residues cysteine 416, cysteine 419, cysteine 434, and cysteine 439. Residues 609 to 687 (EARGPFAGKT…EEEFVRLLKE (79 aa)) enclose the BRCT domain.

It belongs to the NAD-dependent DNA ligase family. LigA subfamily. Requires Mg(2+) as cofactor. Mn(2+) is required as a cofactor.

The enzyme catalyses NAD(+) + (deoxyribonucleotide)n-3'-hydroxyl + 5'-phospho-(deoxyribonucleotide)m = (deoxyribonucleotide)n+m + AMP + beta-nicotinamide D-nucleotide.. Its function is as follows. DNA ligase that catalyzes the formation of phosphodiester linkages between 5'-phosphoryl and 3'-hydroxyl groups in double-stranded DNA using NAD as a coenzyme and as the energy source for the reaction. It is essential for DNA replication and repair of damaged DNA. The protein is DNA ligase of Anaeromyxobacter sp. (strain K).